Consider the following 51-residue polypeptide: Small ribosomal subunit protein eS31 (51 aa).

4 residues coordinate Zn(2+): Cys21, Cys24, Cys39, and Cys42. Residues Cys21–Cys42 form a C4-type zinc finger.

The protein belongs to the eukaryotic ribosomal protein eS31 family. In terms of assembly, part of the 30S ribosomal subunit. It depends on Zn(2+) as a cofactor.

This Picrophilus torridus (strain ATCC 700027 / DSM 9790 / JCM 10055 / NBRC 100828 / KAW 2/3) protein is Small ribosomal subunit protein eS31.